We begin with the raw amino-acid sequence, 229 residues long: Flagellar L-ring protein (229 aa).

The signal sequence occupies residues 1–25; that stretch reads MKQVRLPSSATVRAACAVAVAALAG. Residue Cys-26 is the site of N-palmitoyl cysteine attachment. Cys-26 is lipidated: S-diacylglycerol cysteine.

This sequence belongs to the FlgH family. As to quaternary structure, the basal body constitutes a major portion of the flagellar organelle and consists of four rings (L,P,S, and M) mounted on a central rod.

The protein localises to the cell outer membrane. It is found in the bacterial flagellum basal body. Assembles around the rod to form the L-ring and probably protects the motor/basal body from shearing forces during rotation. This chain is Flagellar L-ring protein, found in Burkholderia orbicola (strain AU 1054).